Reading from the N-terminus, the 139-residue chain is uncharacterized protein (139 aa).

Residues 43-59 (FGVISTLIAIFIGAFWL) traverse the membrane as a helical segment.

Its subcellular location is the membrane. This is an uncharacterized protein from Haemophilus influenzae (strain ATCC 51907 / DSM 11121 / KW20 / Rd).